The primary structure comprises 876 residues: MTDIDARLREDVHLLGELLGNTIRDQYGEAFLDKIEQIRKGAKADRRGSPGAELSASLDQLSEDELLPVARAFNQFLNLANIAEQYQLIHRRDESQPAPFEARVLPELLARLRAEGHSADALARQLGRLEIELVLTAHPTEVARRTLIQKYDAIAGQLAAQDHRDLTSAERGQIQERLQRLIAEAWHTEEIRRTRPTPVDEAKWGFAVIEHSLWQAIPNYLRKADKALFEATGLHLPLESAPIRFASWMGGDRDGNPNVTAAVTREVLLLARWMAADLYLRDIDHLAAELSMQQASPALLARAGDSAEPYRALLKQLRERLRATRNWAHAALSAAVPAGAEVLHNNRDLLEPLQLCYQSLHECGMGVIADGPLLDCLRRAVTFGLFLVRLDVRQDSSRHTSAMTEITDYLGLGRYEDWSEEDRITFLMRELSSRRPLLPGYFKPSADTAEVLATCREIAGAPAASLGSYVISMAGAASDVLAVQLLLKESGVLRPMRVVPLFETLADLDNAGPVMEKLLHMPGYRSRLQGPQEVMIGYSDSAKDAGTTAAAWAQYRAQERLVDICREQQVELLLFHGRGGTVGRGGGPAHAAILSQPPGSVAGRFRTTEQGEMIRFKFGLPDIAEQNLNLYLAAVLEATLLPPPPPQPAWRHLMDELASDGVRAYREVVRDNPQFVEYFRQSTPEQELGRLPLGSRPAKRRAGGIESLRAIPWIFGWTQTRLMLPAWLGWEAALSKALARGEGDLLGQMREQWPFFRTRIDMLEMVLAKADADIARSYDERLVEAELLPLGEHLRDLLSQACAVVLGLTGQSQLLAHSPDTLEFIRLRNTYLDPLHLLQAELLARSRKQQAPQGSPVEQALLVSVAGIAAGLRNTG.

Active-site residues include histidine 138 and lysine 543.

The protein belongs to the PEPCase type 1 family. The cofactor is Mg(2+).

The catalysed reaction is oxaloacetate + phosphate = phosphoenolpyruvate + hydrogencarbonate. Functionally, forms oxaloacetate, a four-carbon dicarboxylic acid source for the tricarboxylic acid cycle. The polypeptide is Phosphoenolpyruvate carboxylase (Pseudomonas fluorescens (strain ATCC BAA-477 / NRRL B-23932 / Pf-5)).